The sequence spans 267 residues: Indole-3-glycerol phosphate synthase (267 aa).

The protein belongs to the TrpC family.

The enzyme catalyses 1-(2-carboxyphenylamino)-1-deoxy-D-ribulose 5-phosphate + H(+) = (1S,2R)-1-C-(indol-3-yl)glycerol 3-phosphate + CO2 + H2O. It participates in amino-acid biosynthesis; L-tryptophan biosynthesis; L-tryptophan from chorismate: step 4/5. In Verminephrobacter eiseniae (strain EF01-2), this protein is Indole-3-glycerol phosphate synthase.